The primary structure comprises 406 residues: Serine/threonine transporter SstT (406 aa).

9 helical membrane passes run 15–35, 47–67, 81–101, 140–160, 191–211, 215–235, 289–309, 315–335, and 362–382; these read LVLQ…VSPS, FVGA…AASI, IIAM…VLSF, ALMS…GLAL, FGIF…ALAG, LLVV…PAMV, IPLG…TLTL, MGIE…AVSA, and IAMQ…SAET.

The protein belongs to the dicarboxylate/amino acid:cation symporter (DAACS) (TC 2.A.23) family.

Its subcellular location is the cell inner membrane. It catalyses the reaction L-serine(in) + Na(+)(in) = L-serine(out) + Na(+)(out). It carries out the reaction L-threonine(in) + Na(+)(in) = L-threonine(out) + Na(+)(out). Functionally, involved in the import of serine and threonine into the cell, with the concomitant import of sodium (symport system). This is Serine/threonine transporter SstT from Vibrio vulnificus (strain CMCP6).